A 273-amino-acid chain; its full sequence is Proteasome subunit beta (273 aa).

A propeptide spans 1 to 50 (removed in mature form; by autocatalysis); it reads MRKDGARLALPLFDPRHDPGPDFAALVSRDAARTVPTSGDGSLGAQVPHG. The active-site Nucleophile is threonine 51.

It belongs to the peptidase T1B family. The 20S proteasome core is composed of 14 alpha and 14 beta subunits that assemble into four stacked heptameric rings, resulting in a barrel-shaped structure. The two inner rings, each composed of seven catalytic beta subunits, are sandwiched by two outer rings, each composed of seven alpha subunits. The catalytic chamber with the active sites is on the inside of the barrel. Has a gated structure, the ends of the cylinder being occluded by the N-termini of the alpha-subunits. Is capped by the proteasome-associated ATPase, ARC.

The protein localises to the cytoplasm. The enzyme catalyses Cleavage of peptide bonds with very broad specificity.. Its pathway is protein degradation; proteasomal Pup-dependent pathway. Its activity is regulated as follows. The formation of the proteasomal ATPase ARC-20S proteasome complex, likely via the docking of the C-termini of ARC into the intersubunit pockets in the alpha-rings, may trigger opening of the gate for substrate entry. Interconversion between the open-gate and close-gate conformations leads to a dynamic regulation of the 20S proteasome proteolysis activity. Its function is as follows. Component of the proteasome core, a large protease complex with broad specificity involved in protein degradation. This is Proteasome subunit beta from Acidimicrobium ferrooxidans (strain DSM 10331 / JCM 15462 / NBRC 103882 / ICP).